A 208-amino-acid chain; its full sequence is Small ribosomal subunit protein uS4 (208 aa).

In terms of domain architecture, S4 RNA-binding spans 95-157; it reads RRIDNIVYRA…DSLKKLIRSN (63 aa).

The protein belongs to the universal ribosomal protein uS4 family. In terms of assembly, part of the 30S ribosomal subunit. Contacts protein S5. The interaction surface between S4 and S5 is involved in control of translational fidelity.

One of the primary rRNA binding proteins, it binds directly to 16S rRNA where it nucleates assembly of the body of the 30S subunit. In terms of biological role, with S5 and S12 plays an important role in translational accuracy. The sequence is that of Small ribosomal subunit protein uS4 from Borrelia garinii subsp. bavariensis (strain ATCC BAA-2496 / DSM 23469 / PBi) (Borreliella bavariensis).